Here is a 301-residue protein sequence, read N- to C-terminus: Light-independent protochlorophyllide reductase iron-sulfur ATP-binding protein (301 aa).

Residues 1 to 13 show a composition bias toward low complexity; it reads MNVTLRPPLTTAP. Residues 1 to 21 are disordered; that stretch reads MNVTLRPPLTTAPRRPDGAGS. ATP is bound by residues 45–50 and K74; that span reads GIGKST. S49 serves as a coordination point for Mg(2+). C130 and C164 together coordinate [4Fe-4S] cluster. ATP is bound by residues 215 to 216 and 239 to 241; these read NR and PDL.

Belongs to the NifH/BchL/ChlL family. Homodimer. Protochlorophyllide reductase is composed of three subunits; BchL, BchN and BchB. [4Fe-4S] cluster is required as a cofactor.

It carries out the reaction chlorophyllide a + oxidized 2[4Fe-4S]-[ferredoxin] + 2 ADP + 2 phosphate = protochlorophyllide a + reduced 2[4Fe-4S]-[ferredoxin] + 2 ATP + 2 H2O. It participates in porphyrin-containing compound metabolism; bacteriochlorophyll biosynthesis (light-independent). Component of the dark-operative protochlorophyllide reductase (DPOR) that uses Mg-ATP and reduced ferredoxin to reduce ring D of protochlorophyllide (Pchlide) to form chlorophyllide a (Chlide). This reaction is light-independent. The L component serves as a unique electron donor to the NB-component of the complex, and binds Mg-ATP. This Bradyrhizobium sp. (strain BTAi1 / ATCC BAA-1182) protein is Light-independent protochlorophyllide reductase iron-sulfur ATP-binding protein.